The primary structure comprises 321 residues: Phospho-N-acetylmuramoyl-pentapeptide-transferase (321 aa).

The next 10 membrane-spanning stretches (helical) occupy residues 1-21, 50-70, 76-96, 112-132, 140-160, 176-196, 200-220, 225-245, 250-270, and 300-320; these read MIFIYAIIALLITFILVPILI, MGGLTFLISIIITSIIAIIFV, IILLLFVTIGFGLIGFIDDYI, FLAQIIIAVIFFVLSDVFHLV, IPFVNFDIPLSFAYVIFIVFW, GLATGLSIIGFAMYAVMSYML, AIGIFCIIMIFALLGFLPYNL, VFMGDTGSLALGGIFATISIM, LSLILIGFVFVVETLSVMLQV, and VVTVFWTVGLITGLIGLWIGV.

This sequence belongs to the glycosyltransferase 4 family. MraY subfamily. The cofactor is Mg(2+).

It is found in the cell membrane. It carries out the reaction UDP-N-acetyl-alpha-D-muramoyl-L-alanyl-gamma-D-glutamyl-L-lysyl-D-alanyl-D-alanine + di-trans,octa-cis-undecaprenyl phosphate = Mur2Ac(oyl-L-Ala-gamma-D-Glu-L-Lys-D-Ala-D-Ala)-di-trans,octa-cis-undecaprenyl diphosphate + UMP. It functions in the pathway cell wall biogenesis; peptidoglycan biosynthesis. In terms of biological role, catalyzes the initial step of the lipid cycle reactions in the biosynthesis of the cell wall peptidoglycan: transfers peptidoglycan precursor phospho-MurNAc-pentapeptide from UDP-MurNAc-pentapeptide onto the lipid carrier undecaprenyl phosphate, yielding undecaprenyl-pyrophosphoryl-MurNAc-pentapeptide, known as lipid I. The polypeptide is Phospho-N-acetylmuramoyl-pentapeptide-transferase (Staphylococcus epidermidis (strain ATCC 35984 / DSM 28319 / BCRC 17069 / CCUG 31568 / BM 3577 / RP62A)).